A 222-amino-acid chain; its full sequence is uncharacterized protein (222 aa).

A run of 2 helical transmembrane segments spans residues 22 to 42 and 189 to 209; these read IRVI…FLYI and AICL…FCLV.

The protein resides in the cell membrane. This is an uncharacterized protein from Escherichia coli (strain K12).